A 201-amino-acid chain; its full sequence is Large ribosomal subunit protein uL4 (201 aa).

A disordered region spans residues 45–71; that stretch reads AQKTRAEVTGSGKKPWRQKGTGRARAG.

It belongs to the universal ribosomal protein uL4 family. In terms of assembly, part of the 50S ribosomal subunit.

Functionally, one of the primary rRNA binding proteins, this protein initially binds near the 5'-end of the 23S rRNA. It is important during the early stages of 50S assembly. It makes multiple contacts with different domains of the 23S rRNA in the assembled 50S subunit and ribosome. Forms part of the polypeptide exit tunnel. In Shewanella sp. (strain MR-4), this protein is Large ribosomal subunit protein uL4.